Consider the following 39-residue polypeptide: Photosystem II reaction center protein L (39 aa).

Residues 18–38 traverse the membrane as a helical segment; sequence SLYLGLLLIAVLGILFSSYFF.

The protein belongs to the PsbL family. In terms of assembly, PSII is composed of 1 copy each of membrane proteins PsbA, PsbB, PsbC, PsbD, PsbE, PsbF, PsbH, PsbI, PsbJ, PsbK, PsbL, PsbM, PsbT, PsbX, PsbY, PsbZ, Psb30/Ycf12, peripheral proteins PsbO, CyanoQ (PsbQ), PsbU, PsbV and a large number of cofactors. It forms dimeric complexes.

The protein resides in the cellular thylakoid membrane. In terms of biological role, one of the components of the core complex of photosystem II (PSII). PSII is a light-driven water:plastoquinone oxidoreductase that uses light energy to abstract electrons from H(2)O, generating O(2) and a proton gradient subsequently used for ATP formation. It consists of a core antenna complex that captures photons, and an electron transfer chain that converts photonic excitation into a charge separation. This subunit is found at the monomer-monomer interface and is required for correct PSII assembly and/or dimerization. This Crocosphaera subtropica (strain ATCC 51142 / BH68) (Cyanothece sp. (strain ATCC 51142)) protein is Photosystem II reaction center protein L.